The following is a 194-amino-acid chain: MDIVLGIRVEDCTLVATSKAATRGISVLKDTDDKTRQLNSHNLMAYSGEAGDTVQFAEYIQANTQLYTMRENDTELSPKATASFVRNQLATSIRSRKPYQVNVLLAGYDTNTGKPSLNWIDYLGTQVELPYAAHGYAGFYCTSLLDKHYKKGMNFEDGLDLLKKCIKELETRMPIDFKGCYIKVVDKEGIKLVE.

Belongs to the peptidase T1B family. The 26S proteasome consists of a 20S proteasome core and two 19S regulatory subunits. The 20S proteasome core is composed of 28 subunits that are arranged in four stacked rings, resulting in a barrel-shaped structure. The two end rings are each formed by seven alpha subunits, and the two central rings are each formed by seven beta subunits. The catalytic chamber with the active sites is on the inside of the barrel.

It is found in the cytoplasm. It localises to the nucleus. Functionally, non-catalytic component of the proteasome, a multicatalytic proteinase complex which is characterized by its ability to cleave peptides with Arg, Phe, Tyr, Leu, and Glu adjacent to the leaving group at neutral or slightly basic pH. The proteasome has an ATP-dependent proteolytic activity. This is Probable proteasome subunit beta type-4 (PRO2) from Meyerozyma guilliermondii (strain ATCC 6260 / CBS 566 / DSM 6381 / JCM 1539 / NBRC 10279 / NRRL Y-324) (Yeast).